A 398-amino-acid polypeptide reads, in one-letter code: Argininosuccinate synthase (398 aa).

8–16 (AYSGGLDTS) lines the ATP pocket. Y87 contacts L-citrulline. ATP is bound at residue G117. Residues T119, N123, and D124 each coordinate L-aspartate. Position 123 (N123) interacts with L-citrulline. Positions 127, 175, 260, and 272 each coordinate L-citrulline.

Belongs to the argininosuccinate synthase family. Type 1 subfamily. Homotetramer.

The protein resides in the cytoplasm. The enzyme catalyses L-citrulline + L-aspartate + ATP = 2-(N(omega)-L-arginino)succinate + AMP + diphosphate + H(+). The protein operates within amino-acid biosynthesis; L-arginine biosynthesis; L-arginine from L-ornithine and carbamoyl phosphate: step 2/3. The protein is Argininosuccinate synthase of Mycobacterium ulcerans (strain Agy99).